The following is a 30-amino-acid chain: Root cyclotide 1 (30 aa).

The cyclopeptide (Gly-Asn) cross-link spans 1 to 30 (GIPCAESCVWIPCTVTALLGCSCSNKVCYN). 3 cysteine pairs are disulfide-bonded: Cys4–Cys21, Cys8–Cys23, and Cys13–Cys28.

This is a cyclic peptide. As to expression, expressed in roots.

Functionally, probably participates in a plant defense mechanism. This Viola hederacea (Australian violet) protein is Root cyclotide 1.